Consider the following 167-residue polypeptide: UPF0336 protein MAP_4109 (167 aa).

One can recognise a MaoC-like domain in the interval glycine 21–lysine 124.

The protein belongs to the UPF0336 family.

This Mycolicibacterium paratuberculosis (strain ATCC BAA-968 / K-10) (Mycobacterium paratuberculosis) protein is UPF0336 protein MAP_4109.